The sequence spans 320 residues: 4-hydroxy-3-methylbut-2-enyl diphosphate reductase 2 (320 aa).

Cys-18 contributes to the [4Fe-4S] cluster binding site. The (2E)-4-hydroxy-3-methylbut-2-enyl diphosphate site is built by His-47 and His-81. Residues His-47 and His-81 each coordinate dimethylallyl diphosphate. 2 residues coordinate isopentenyl diphosphate: His-47 and His-81. Cys-103 contacts [4Fe-4S] cluster. (2E)-4-hydroxy-3-methylbut-2-enyl diphosphate is bound at residue His-131. Position 131 (His-131) interacts with dimethylallyl diphosphate. Residue His-131 participates in isopentenyl diphosphate binding. The active-site Proton donor is the Glu-133. Position 172 (Thr-172) interacts with (2E)-4-hydroxy-3-methylbut-2-enyl diphosphate. Cys-202 provides a ligand contact to [4Fe-4S] cluster. (2E)-4-hydroxy-3-methylbut-2-enyl diphosphate contacts are provided by Ser-230, Ser-231, Asn-232, and Ser-275. 4 residues coordinate dimethylallyl diphosphate: Ser-230, Ser-231, Asn-232, and Ser-275. Positions 230, 231, 232, and 275 each coordinate isopentenyl diphosphate.

Belongs to the IspH family. It depends on [4Fe-4S] cluster as a cofactor.

The catalysed reaction is isopentenyl diphosphate + 2 oxidized [2Fe-2S]-[ferredoxin] + H2O = (2E)-4-hydroxy-3-methylbut-2-enyl diphosphate + 2 reduced [2Fe-2S]-[ferredoxin] + 2 H(+). It catalyses the reaction dimethylallyl diphosphate + 2 oxidized [2Fe-2S]-[ferredoxin] + H2O = (2E)-4-hydroxy-3-methylbut-2-enyl diphosphate + 2 reduced [2Fe-2S]-[ferredoxin] + 2 H(+). It participates in isoprenoid biosynthesis; dimethylallyl diphosphate biosynthesis; dimethylallyl diphosphate from (2E)-4-hydroxy-3-methylbutenyl diphosphate: step 1/1. The protein operates within isoprenoid biosynthesis; isopentenyl diphosphate biosynthesis via DXP pathway; isopentenyl diphosphate from 1-deoxy-D-xylulose 5-phosphate: step 6/6. Catalyzes the conversion of 1-hydroxy-2-methyl-2-(E)-butenyl 4-diphosphate (HMBPP) into a mixture of isopentenyl diphosphate (IPP) and dimethylallyl diphosphate (DMAPP). Acts in the terminal step of the DOXP/MEP pathway for isoprenoid precursor biosynthesis. The protein is 4-hydroxy-3-methylbut-2-enyl diphosphate reductase 2 of Rhodopseudomonas palustris (strain ATCC BAA-98 / CGA009).